A 243-amino-acid chain; its full sequence is Transcription factor TCP6 (243 aa).

Residues 1-55 (MVMEPKKNQNLPSFLNPSRQNQDNDKKRKQTEVKGFDIVVGEKRKKKENEEEDQE) are disordered. A compositionally biased stretch (polar residues) spans 8–21 (NQNLPSFLNPSRQN). Residues 22-35 (QDNDKKRKQTEVKG) are compositionally biased toward basic and acidic residues. Positions 42 to 66 (EKRKKKENEEEDQEIQILYEKEKKK) form a coiled coil. Residues 68-122 (NKDRHLKVEGRGRRVRLPPLCAARIYQLTKELGHKSDGETLEWLLQHAEPSILSA) enclose the TCP domain.

In terms of assembly, interacts with SPL.

The protein localises to the nucleus. This chain is Transcription factor TCP6 (TCP6), found in Arabidopsis thaliana (Mouse-ear cress).